The chain runs to 178 residues: MPKPEKVQKVEELYQKMLNANALIFTEFKGLSVADLTQLRGKIRPLNAEYRVVKNTLALLAIRKIYPDKDLEKFFVGPTAITYCYGDPFGVLKALVDYAKEHELLKFKGGIIEGEVYSADEVKELAKLPPKEVLLSQVVGAISAPLSSLVWSLKWPVNKLVWTLDAIAKEKEKISINQ.

This sequence belongs to the universal ribosomal protein uL10 family. Part of the ribosomal stalk of the 50S ribosomal subunit. The N-terminus interacts with L11 and the large rRNA to form the base of the stalk. The C-terminus forms an elongated spine to which L12 dimers bind in a sequential fashion forming a multimeric L10(L12)X complex.

In terms of biological role, forms part of the ribosomal stalk, playing a central role in the interaction of the ribosome with GTP-bound translation factors. The protein is Large ribosomal subunit protein uL10 of Dictyoglomus thermophilum (strain ATCC 35947 / DSM 3960 / H-6-12).